Consider the following 34-residue polypeptide: Kappa-theraphotoxin-Scg1a (34 aa).

3 cysteine pairs are disulfide-bonded: C2-C16, C9-C21, and C15-C28. An involved in active face region spans residues 4–6 (YLF).

The protein belongs to the neurotoxin 10 (Hwtx-1) family. 09 (HaTx) subfamily. As to expression, expressed by the venom gland.

The protein localises to the secreted. Its function is as follows. Reversibly inhibits potassium currents in oocytes expressing Kv2.1/KCNB1 channels (Kd=2.7 uM). Acts by shifting activation of the channel to more depolarized voltages. The toxin may bind to the S3b-S4 helices of the voltage sensor paddle. One, two, three or four toxin molecules may bind the Kv2.1/KCNB1 channel. It shows low to moderate affinity for lipid bilayers. It partitions into the bilayer membrane, where it stabilizes at the water/membrane interface. The sequence is that of Kappa-theraphotoxin-Scg1a from Stromatopelma calceatum griseipes (Feather leg baboon tarantula).